A 427-amino-acid polypeptide reads, in one-letter code: Serine--tRNA ligase (427 aa).

L-serine is bound at residue 231-233 (TAE). 262 to 264 (RSE) provides a ligand contact to ATP. L-serine is bound at residue glutamate 285. Position 349 to 352 (349 to 352 (EISS)) interacts with ATP. Residue serine 385 coordinates L-serine.

The protein belongs to the class-II aminoacyl-tRNA synthetase family. Type-1 seryl-tRNA synthetase subfamily. In terms of assembly, homodimer. The tRNA molecule binds across the dimer.

It localises to the cytoplasm. It carries out the reaction tRNA(Ser) + L-serine + ATP = L-seryl-tRNA(Ser) + AMP + diphosphate + H(+). The enzyme catalyses tRNA(Sec) + L-serine + ATP = L-seryl-tRNA(Sec) + AMP + diphosphate + H(+). Its pathway is aminoacyl-tRNA biosynthesis; selenocysteinyl-tRNA(Sec) biosynthesis; L-seryl-tRNA(Sec) from L-serine and tRNA(Sec): step 1/1. In terms of biological role, catalyzes the attachment of serine to tRNA(Ser). Is also able to aminoacylate tRNA(Sec) with serine, to form the misacylated tRNA L-seryl-tRNA(Sec), which will be further converted into selenocysteinyl-tRNA(Sec). This Hahella chejuensis (strain KCTC 2396) protein is Serine--tRNA ligase.